The sequence spans 183 residues: Lipid droplet coating protein Cap20 (183 aa).

It belongs to the perilipin family.

It localises to the lipid droplet. Functionally, lipid droplet coating protein that regulates lipid metabolism, appressorial turgor pressure, and virulence. Appressorial turgor pressure is important for the mechanical penetration of the host cuticle during infection. The sequence is that of Lipid droplet coating protein Cap20 (Cap20) from Colletotrichum gloeosporioides (Anthracnose fungus).